The following is a 175-amino-acid chain: Nucleoside diphosphate kinase 6 (175 aa).

Residues Lys8, Phe57, Arg85, Thr91, Arg105, and Asn115 each coordinate ATP. His118 functions as the Pros-phosphohistidine intermediate in the catalytic mechanism.

Belongs to the NDK family. Mg(2+) serves as cofactor.

It carries out the reaction a 2'-deoxyribonucleoside 5'-diphosphate + ATP = a 2'-deoxyribonucleoside 5'-triphosphate + ADP. It catalyses the reaction a ribonucleoside 5'-diphosphate + ATP = a ribonucleoside 5'-triphosphate + ADP. Its function is as follows. Major role in the synthesis of nucleoside triphosphates other than ATP. The ATP gamma phosphate is transferred to the NDP beta phosphate via a ping-pong mechanism, using a phosphorylated active-site intermediate. This chain is Nucleoside diphosphate kinase 6 (Nme6), found in Rattus norvegicus (Rat).